We begin with the raw amino-acid sequence, 90 residues long: MANNKSALKRIRQTKKRTERNRYFRTRIKTITKKVESAVAEGNYEAALEAWKEANKKFQGYINKGILKKNTARRKISRLHHLVKSIEPSA.

The protein belongs to the bacterial ribosomal protein bS20 family.

Binds directly to 16S ribosomal RNA. This chain is Small ribosomal subunit protein bS20, found in Nautilia profundicola (strain ATCC BAA-1463 / DSM 18972 / AmH).